A 2116-amino-acid polypeptide reads, in one-letter code: MEKLLDEVLAPGGPYNLTVGSWVRDHVRSIVEGAWEVRDVVTAAQKRAIVAVIPRPVFTQMQVSDHPALHAISRYTRRHWIEWGPKEALHVLIDPSPGLLREVARVERRWVALCLHRTARKLATALAETAGEAWHADYVCALRGAPSGPFYVHPEDVPRGGRAVADRCLLYYTPMQMCELMRTIDATLLVAVDLWPVALAAHVGDDWDDLGIAWHLDHDGGCPADCRGAGAGPTPGYTRPCTTRIYQVLPDTAHPGRLYRCGPRLWTRDCAVAELSWEVAQHCGHQARVRAVRCTLPIRHVRSLQPSARVRLPDLVHLAEVGRWRWFSLPRPVFQRMLSYCKTLSPDAYYSERVFKFKNALSHSITLAGNVLQEGWKGTCAEEDALCAYVAFRAWQSNARLAGIMKGAKRCAADSLSVAGWLDTIWDAIKRFFGSVPLAERMEEWEQDAAVAAFDRGPLEDGGHHLDTVQPPKPLPRPEIAATWIVHAASADRHCACAPRCDVPRERPSAPAGPPDDEALIPPWLFAERRTLRCREWDFEALRARADTAATPAPLAPRPARYPTVLYRHPAHHGPWLTLDEPGEADAALVLCDPLGQPLRGPERHFAAGAHMCAQARGLQAFVRVVPPPERPWADGGARTWAKFFRGCAWAQRLLGEPAVMHLPYTDGDVPQLIALALRTLAQQGAALALSVRDLPGGAAFDANAVTAAVRADPGQLALTSPPPDNPPPPRRARRSQRHADARGPPPPAPVRDPPPLPPSPPAPRRAGDPASPISAEPADRARDAEPEVACEPGGPATPTRADPDSDIVESYARAAGPVHLRVRNIMDPPPGCKVVVNAANEGLLAGSGVCGAIFASAAATLAEDCRRLAPCPTGEAVATPGHGCGYTHIIHAVAPRRPQDPAALEQSEALLERAYRSVVALAAARRWACVACPLLGAGIYGWSAAESLRAALAAARTEPAERVSLHICHPDRATLMHASVLVGAGLAARRVSPPPTEPLASCPADDPGRSTQRTASPPAAPPGDAAAPESRGCQGCELCRYTRVTNDRAYVNLWLERDRGATGWAMRIPEVVVYGPEHLAAHFPLNHYSVLKPAEVRPPRGMCGSDMWRCRGWQGMPQVRCTPSNAHAALCRIGIPPRVSTRGDERDPNTCWLRAAANVAQAARACGAYTSAGCPKCAYGRALSEARTHEAFAALSQRWIASHADASLDGTGDPLDPLMETVGCACSRVWVGSEHEAPPDHLLVSLHRAPNGPWGVVLEVRARPEGGNPTGHFVCAVGGGPRRVSDRPHLWLAVPLSRGGGTCAATDEGLAQAYYDDLEVRRLGDDAMARAALASVQRPRKGPYNIKVWNMAAGAGKTTRILAAFTREDLYVCPTNALLHEIQAKLRARDIDIKNAATYERALTKPLAAYRRIYIDEAFTLGGEYCAFVASQTTAEVICVGDRDQCGPHYANNCRTPVPDRWPTERSRHTWRFPDCWAARLRAGLDYDVEGEHAGTFACNLWDGRQVDLHLAFSRETVRRLHEAGIRAYTVREAQGMSVGTACIHVGRDGTDVALALTRDLAIVSLTRASDALYLHELEDGSLRAAGLSAFLDAGALAELKEVPAGIDRVVAVEQAPPPLPPADGIPEAQDVPPFCPRTLEELVFGRAGHPHYADLNRVTEGEREVRYMRISRHLLNKNHTEMPGTERVLSAVCAVRRYRAGEDGSTLRTAVARQHPRPFRQIPPPRVTAGVAQEWRMTYLRERIDLTDVYTQMGVAARELTDRYARRYPEIFAGMCTAQSLSVPAFLKATLKCVDAALGPRDTEDCHAAQGKAGLEIRAWAKEWVQVMSPHFRAIQKIIMRALRPQFLVAAGHTEPEVDAWWQAHYTTNAIEVDFTEFDMNQTLATRDVELEISAALLGLPCAEDYRALRAGSYCTLRELGSTETGCERTSGEPATLLHNTTVAMCMAMRMVPKGVRWAGIFQGDDMVIFLPEGARSAALKWTPSEVGLFGFHIPVKHVSTPTPSFCGHVGTAAGLFHDVMHQAIKVLCRRFDPDVLEEQQVALLDRLRGVYAALPDTVAANAAYYDYSAERVLAIVRELTAYARGRGLDHPATIGALEEIQTPYARANLHDAD.

Positions 36–49 (EVRDVVTAAQKRAI) are required for efficient proteolysis and P150-P90 interaction. An Alphavirus-like MT domain is found at 57 to 247 (VFTQMQVSDH…TRPCTTRIYQ (191 aa)). The segment at 715 to 805 (GQLALTSPPP…PATPTRADPD (91 aa)) is disordered. Pro residues-rich tracts occupy residues 721 to 730 (SPPPDNPPPP) and 744 to 764 (GPPP…PPAP). 3 short sequence motifs (pxxPxR; class II SH3-binding) span residues 727–732 (PPPPRR), 747–752 (PPAPVR), and 761–766 (PPAPRR). The Macro domain maps to 806–985 (SDIVESYARA…LMHASVLVGA (180 aa)). A disordered region spans residues 992–1032 (VSPPPTEPLASCPADDPGRSTQRTASPPAAPPGDAAAPESR). The region spanning 1000-1301 (LASCPADDPG…WLAVPLSRGG (302 aa)) is the Peptidase C27 domain. The active-site For cysteine protease activity is the Cys1152. Residues 1152–1183 (CWLRAAANVAQAARACGAYTSAGCPKCAYGRA) are interaction with host CALM1. Positions 1175, 1178, 1227, and 1273 each coordinate Zn(2+). Positions 1193–1228 (FAALSQRWIASHADASLDGTGDPLDPLMETVGCACS) are EF-hand-like. The active-site For cysteine protease activity is the His1273. The (+)RNA virus helicase ATP-binding domain occupies 1320–1468 (EVRRLGDDAM…VPDRWPTERS (149 aa)). 1352 to 1359 (MAAGAGKT) provides a ligand contact to a ribonucleoside 5'-triphosphate. The (+)RNA virus helicase C-terminal domain maps to 1469-1609 (RHTWRFPDCW…ELKEVPAGID (141 aa)). The segment at 1700 to 1900 (YRAGEDGSTL…VELEISAALL (201 aa)) is involved in P150-P90 interaction. Residues 1870-1981 (TNAIEVDFTE…FLPEGARSAA (112 aa)) enclose the RdRp catalytic domain. The Human RB1 binding signature appears at 1902 to 1906 (LPCAE).

As to quaternary structure, interacts with RNA-directed RNA polymerase p90. Interacts with host CALM1; this interaction is necessary for the protease activity and viral infectivity. Interacts with host C1QBP. Interacts with the capsid protein. In terms of assembly, interacts with human RB1/retinoblastoma protein. Interacts with protease/methyltransferase p150. The cofactor is Zn(2+). Specific enzymatic cleavage by its own cysteine protease yield mature proteins p150 and p90.

It is found in the host membrane. It localises to the host cytoplasm. Its subcellular location is the host perinuclear region. The catalysed reaction is RNA(n) + a ribonucleoside 5'-triphosphate = RNA(n+1) + diphosphate. It catalyses the reaction a ribonucleoside 5'-triphosphate + H2O = a ribonucleoside 5'-diphosphate + phosphate + H(+). The enzyme catalyses ATP + H2O = ADP + phosphate + H(+). Functionally, probable principal replicase for the negative-strand DNA, which replicates the 40S (+) genomic RNA into (-) antigenomic RNA. It cannot replicate the (-) into (+) until cleaved into p150 and p90 mature proteins. Protease that cleaves the precursor polyprotein into two mature products. Together with RNA-directed RNA polymerase p90, replicates the 40S genomic and antigenomic RNA by recognizing replications specific signals. The heterodimer P150/p90 is probably the principal replicase for positive-strand genomic RNA and the 24S subgenomic RNA, which codes for structural proteins. Responsible for the mRNA-capping of the viral mRNAs. This function is necessary since all viral RNAs are synthesized in the cytoplasm, and host capping enzymes are restricted to the nucleus. Forms fibers late in the infection that may be involved in cell-to-cell spread of the virus RNA in the absence of virus particle formation. In terms of biological role, together with protease/methyltransferase p150, replicates the 40S genomic and antigenomic RNA by recognizing replications specific signals. The heterodimer P150/p90 is probably the principal replicase for positive-strand genomic RNA and the 24S subgenomic RNA, which codes for structural proteins. A helicase activity is probably also present. This chain is Non-structural polyprotein p200, found in Homo sapiens (Human).